A 209-amino-acid chain; its full sequence is Large ribosomal subunit protein uL3 (209 aa).

Residues 133–153 (THGNSLSHRVPGSIGQNQTPG) form a disordered region. Q150 is subject to N5-methylglutamine.

Belongs to the universal ribosomal protein uL3 family. Part of the 50S ribosomal subunit. Forms a cluster with proteins L14 and L19. In terms of processing, methylated by PrmB.

One of the primary rRNA binding proteins, it binds directly near the 3'-end of the 23S rRNA, where it nucleates assembly of the 50S subunit. The chain is Large ribosomal subunit protein uL3 from Pectobacterium carotovorum subsp. carotovorum (strain PC1).